Reading from the N-terminus, the 412-residue chain is 1-deoxy-D-xylulose 5-phosphate reductoisomerase (412 aa).

Residues Thr-10, Gly-11, Ser-12, Ile-13, Gly-36, Lys-37, Asn-38, and Asn-130 each contribute to the NADPH site. Residue Lys-131 coordinates 1-deoxy-D-xylulose 5-phosphate. Residue Glu-132 coordinates NADPH. Asp-156 serves as a coordination point for Mn(2+). 4 residues coordinate 1-deoxy-D-xylulose 5-phosphate: Ser-157, Glu-158, Ser-194, and His-217. Glu-158 contributes to the Mn(2+) binding site. Gly-223 is a binding site for NADPH. 1-deoxy-D-xylulose 5-phosphate-binding residues include Ser-230, Asn-235, Lys-236, and Glu-239. Residue Glu-239 participates in Mn(2+) binding.

Belongs to the DXR family. Mg(2+) serves as cofactor. It depends on Mn(2+) as a cofactor.

The enzyme catalyses 2-C-methyl-D-erythritol 4-phosphate + NADP(+) = 1-deoxy-D-xylulose 5-phosphate + NADPH + H(+). It functions in the pathway isoprenoid biosynthesis; isopentenyl diphosphate biosynthesis via DXP pathway; isopentenyl diphosphate from 1-deoxy-D-xylulose 5-phosphate: step 1/6. Its function is as follows. Catalyzes the NADPH-dependent rearrangement and reduction of 1-deoxy-D-xylulose-5-phosphate (DXP) to 2-C-methyl-D-erythritol 4-phosphate (MEP). The polypeptide is 1-deoxy-D-xylulose 5-phosphate reductoisomerase (Prochlorococcus marinus (strain NATL2A)).